The sequence spans 310 residues: p-hydroxybenzoic acid efflux pump subunit AaeA (310 aa).

Residues Val-12–Tyr-32 traverse the membrane as a helical segment.

The protein belongs to the membrane fusion protein (MFP) (TC 8.A.1) family.

The protein localises to the cell inner membrane. Its function is as follows. Forms an efflux pump with AaeB. The protein is p-hydroxybenzoic acid efflux pump subunit AaeA of Erwinia tasmaniensis (strain DSM 17950 / CFBP 7177 / CIP 109463 / NCPPB 4357 / Et1/99).